We begin with the raw amino-acid sequence, 220 residues long: MTILTIEALRTEAAIFSAAESIHPEPLLYGVTDGKAVGTYIEQKFRLYLKEHYEFVQGNSASGIDFPGLLVDVKVTSIRQPQSSCPFKSARQKIFGLGYSLLIFVYDKIDNSTNRTATLNILHTIYVSAERTADFQMTRGIRNILANEGNKDDLIAFMSDRNLPVDEIEAGNVADEILRNPPMQGFLTISNALQWRLQYGRVIERAGQEDGILTVYRNNP.

The catalysed reaction is Endonucleolytic cleavage of DNA to give specific double-stranded fragments with terminal 5'-phosphates.. In terms of biological role, a P subtype restriction enzyme that recognizes the double-stranded sequence 5'-TTCGAA-3' and cleaves after T-2. This is Type II restriction enzyme NspV from Nostoc sp. (strain ATCC 29411 / PCC 7524).